Here is a 1931-residue protein sequence, read N- to C-terminus: Chitin synthase 5 (1931 aa).

One can recognise a Myosin motor domain in the interval 11–777; the sequence is LGVTDLSSLA…LFRFLEDRLR (767 aa). Residue 122–129 coordinates ATP; it reads GPTGSGKS. Residues asparagine 510, asparagine 538, and asparagine 676 are each glycosylated (N-linked (GlcNAc...) asparagine). The actin-binding stretch occupies residues 655–677; the sequence is VDSLLKSFDQTQTWYIFALRPND. Residues 798–817 are disordered; sequence DPFSPHRYQPTSFDSQDHVY. N-linked (GlcNAc...) asparagine glycosylation occurs at asparagine 842. 2 helical membrane passes run 912 to 932 and 951 to 971; these read WVWLCSILTWWIPGFLLSKIA and MIIWFICGCAIFVIAILGPVI. N-linked (GlcNAc...) asparagine glycans are attached at residues asparagine 1062, asparagine 1078, and asparagine 1146. A helical transmembrane segment spans residues 1220–1240; that stretch reads ILLALSCVMVAVIGFKFLSAL. Asparagine 1583 carries an N-linked (GlcNAc...) asparagine glycan. Transmembrane regions (helical) follow at residues 1615 to 1635, 1641 to 1661, and 1668 to 1688; these read LSTIIAPVTVAYIVYLIYLIV, IPTLSIIMLAAIYGLQAMIFI, and MIAWMIFYICAIPVFSFLLPL. The disordered stretch occupies residues 1826–1847; it reads AHRPSLDDTSSFHQPYQPAPRP. The DEK-C domain maps to 1875-1930; it reads AITDSQLERSIRKICANAELDKLTKKGVRKELEREYGVELTERREAINRLVEKVLT.

The protein in the N-terminal section; belongs to the TRAFAC class CC myosin-kinesin ATPase superfamily. Myosin family. This sequence in the C-terminal section; belongs to the chitin synthase family. Class V subfamily.

The protein resides in the cell membrane. It is found in the cell septum. It localises to the cell tip. The enzyme catalyses [(1-&gt;4)-N-acetyl-beta-D-glucosaminyl](n) + UDP-N-acetyl-alpha-D-glucosamine = [(1-&gt;4)-N-acetyl-beta-D-glucosaminyl](n+1) + UDP + H(+). In terms of biological role, polymerizes chitin, a structural polymer of the cell wall and septum, by transferring the sugar moiety of UDP-GlcNAc to the non-reducing end of the growing chitin polymer. Produces a large proportion of the chitin that is not deacetylated to chitosan. The polypeptide is Chitin synthase 5 (Cryptococcus neoformans var. grubii serotype A (strain H99 / ATCC 208821 / CBS 10515 / FGSC 9487) (Filobasidiella neoformans var. grubii)).